A 237-amino-acid chain; its full sequence is LexA repressor (237 aa).

Residues 26 to 46 constitute a DNA-binding region (H-T-H motif); the sequence is FDEMKIALELTSKSGIHRLIT. Catalysis depends on for autocatalytic cleavage activity residues S158 and K196.

It belongs to the peptidase S24 family. In terms of assembly, homodimer.

The catalysed reaction is Hydrolysis of Ala-|-Gly bond in repressor LexA.. In terms of biological role, represses a number of genes involved in the response to DNA damage (SOS response), including recA and lexA. In the presence of single-stranded DNA, RecA interacts with LexA causing an autocatalytic cleavage which disrupts the DNA-binding part of LexA, leading to derepression of the SOS regulon and eventually DNA repair. The chain is LexA repressor from Bartonella quintana (strain Toulouse) (Rochalimaea quintana).